The following is a 221-amino-acid chain: MKKLLYISVNTKPEGMSASKTVGREFVDRFVQNYPEYQLIEHDICNEYIPELDHRFLNDNGDIVSGNDYNLLSDNDKKIVDRINDLCNEFVSADVYVIAYPMWSSLFPPRLKMYIDCIVQNGKTIKISEDESSGLLSDKERSVLCIQSSGGVYPKIISWKINHGINYLHDIFRHLGIKKFEKLLVEGVDVQDIGKEKAVEKAFDEIDELIDKMQVRDFVKQ.

FMN-binding positions include S17–S19 and S148–G151.

The protein belongs to the azoreductase type 1 family. Homodimer. FMN serves as cofactor.

It carries out the reaction 2 a quinone + NADH + H(+) = 2 a 1,4-benzosemiquinone + NAD(+). The enzyme catalyses N,N-dimethyl-1,4-phenylenediamine + anthranilate + 2 NAD(+) = 2-(4-dimethylaminophenyl)diazenylbenzoate + 2 NADH + 2 H(+). Functionally, quinone reductase that provides resistance to thiol-specific stress caused by electrophilic quinones. In terms of biological role, also exhibits azoreductase activity. Catalyzes the reductive cleavage of the azo bond in aromatic azo compounds to the corresponding amines. The protein is FMN-dependent NADH:quinone oxidoreductase 1 of Clostridium acetobutylicum (strain ATCC 824 / DSM 792 / JCM 1419 / IAM 19013 / LMG 5710 / NBRC 13948 / NRRL B-527 / VKM B-1787 / 2291 / W).